Consider the following 403-residue polypeptide: MTDSEPQTLNNNSEITANHNDDILEYLSVDDYDYELPDQLIARYPLAQRSASKLLYLPTNNANSQVEDKLFSELPDILNAGDLIVFNDTKVMKARLFGQKDTGGKIEVLIERLVSLSDVNSAYLDEIIANSKTIDTTIIAEKHIALCHIKASKALKLGQGLVLADGHMTGIMIGRQENLFILAFDTPILPDLEQYGELPIPPYFERHADATDNTRYQTVFHDPAKLASVAAPTASLHFDDIVLEKLAAKGIQTAFVTLHVGAGTFAPVKTDNLLNHTMHSEYAHLPQATAELINQTHANGKQVIAIGTTVTRVLETAYQQTAVDGQSLSGWSGDTDIFIYPGFKFGVVDKLLTNFHLPKSTLLMLVSAFATKKSIEQAYQHAIKSQYRFFSYGDAMLLDKQVD.

It belongs to the QueA family. As to quaternary structure, monomer.

It is found in the cytoplasm. The catalysed reaction is 7-aminomethyl-7-carbaguanosine(34) in tRNA + S-adenosyl-L-methionine = epoxyqueuosine(34) in tRNA + adenine + L-methionine + 2 H(+). Its pathway is tRNA modification; tRNA-queuosine biosynthesis. Transfers and isomerizes the ribose moiety from AdoMet to the 7-aminomethyl group of 7-deazaguanine (preQ1-tRNA) to give epoxyqueuosine (oQ-tRNA). The protein is S-adenosylmethionine:tRNA ribosyltransferase-isomerase of Psychrobacter arcticus (strain DSM 17307 / VKM B-2377 / 273-4).